A 356-amino-acid chain; its full sequence is MKDAKPFPVLKNDNLLRAARGEVVDRVPVWVMRQAGRYLPEFQELRKHHDFFTVCRTPELACEVTMQPLRRFDLDASIIFSDILVIPQALGLTVEMHAGVGPVLPQPIVVPEDLKRLTPDGALSRLSYVGDAITMMRHKLEGRVPLIGFTGAPWTLMGYMIEGGGSKTMSKAKAWLNEHPEDSKLFLNLLTDAIVDYLEMQVKAGAQMLQVFESSAEHLSKEQFLQWCVPYLKRIRDELVDRLTKKAIPVVPMTLFAKGAGHSLKEQSELGYDVIGLDWTVDPLEARNLVGPNITLQGNLDPQDMYRDPDELRNLTTEMVHKFGKSRYIANLGHGITPQTPITSMEVLVEAVHKAL.

Residues R33, A35, R37, R46, D82, Y159, S214, and H334 each contribute to the coproporphyrinogen I site. R33, A35, and R37 together coordinate coproporphyrinogen III. Residues D82, Y159, S214, and H334 each coordinate coproporphyrinogen III.

Belongs to the uroporphyrinogen decarboxylase family. As to quaternary structure, homodimer.

Its subcellular location is the cytoplasm. The protein localises to the cytosol. The catalysed reaction is uroporphyrinogen III + 4 H(+) = coproporphyrinogen III + 4 CO2. It functions in the pathway porphyrin-containing compound metabolism; protoporphyrin-IX biosynthesis; coproporphyrinogen-III from 5-aminolevulinate: step 4/4. Its function is as follows. Catalyzes the decarboxylation of four acetate groups of uroporphyrinogen-III to yield coproporphyrinogen-III. The protein is Uroporphyrinogen decarboxylase of Drosophila melanogaster (Fruit fly).